The following is a 380-amino-acid chain: cAMP-dependent protein kinase type I-alpha regulatory subunit (380 aa).

Methionine 1 carries the post-translational modification N-acetylmethionine. Position 2 is an N-acetylalanine; in cAMP-dependent protein kinase type I-alpha regulatory subunit, N-terminally processed (alanine 2). A dimerization and phosphorylation region spans residues alanine 2–valine 135. 3 positions are modified to phosphoserine: serine 3, serine 76, and serine 82. Positions isoleucine 64–arginine 96 are disordered. The Pseudophosphorylation motif signature appears at arginine 95–isoleucine 99. Serine 100 is subject to Phosphoserine. Residues leucine 136–serine 253, glutamate 201, arginine 210, isoleucine 254–valine 380, glutamate 325, and arginine 334 contribute to the 3',5'-cyclic AMP site. The residue at position 257 (serine 257) is a Phosphoserine.

This sequence belongs to the cAMP-dependent kinase regulatory chain family. In terms of assembly, the inactive holoenzyme is composed of two regulatory chains and two catalytic chains. Activation by cAMP releases the two active catalytic monomers and the regulatory dimer. Interacts with PRKACA and PRKACB. PRKAR1A also interacts with RFC2; the complex may be involved in cell survival. Interacts with AKAP4. Interacts with RARA; the interaction occurs in the presence of cAMP or FSH and regulates RARA transcriptional activity. Interacts with the phosphorylated form of PJA2. Interacts with CBFA2T3. Interacts with PRKX; regulates this cAMP-dependent protein kinase. Interacts with smAKAP; this interaction may target PRKAR1A to the plasma membrane. Interacts with AICDA. The pseudophosphorylation site binds to the substrate-binding region of the catalytic chain, resulting in the inhibition of its activity. The physiological significance of the in vitro phosphorylation of a proximal serine is unclear. Four types of regulatory chains are found: I-alpha, I-beta, II-alpha, and II-beta. Their expression varies among tissues and is in some cases constitutive and in others inducible.

The protein localises to the cell membrane. In terms of biological role, regulatory subunit of the cAMP-dependent protein kinases involved in cAMP signaling in cells. The polypeptide is cAMP-dependent protein kinase type I-alpha regulatory subunit (PRKAR1A) (Bos taurus (Bovine)).